Consider the following 530-residue polypeptide: Transcriptional regulator VasH (530 aa).

The Sigma-54 factor interaction domain occupies 193–422 (LIGESAAMQK…LKHLIEFGCA (230 aa)). ATP contacts are provided by residues 221–228 (GETGTGKE) and 284–293 (ANGGTLFLDE).

Transcriptional regulator of the type VI secretion system. This is Transcriptional regulator VasH from Vibrio cholerae serotype O1 (strain ATCC 39315 / El Tor Inaba N16961).